The chain runs to 355 residues: Uroporphyrinogen decarboxylase (355 aa).

Substrate-binding positions include 27-31 (RQAGR), aspartate 78, tyrosine 155, serine 210, and histidine 328.

The protein belongs to the uroporphyrinogen decarboxylase family. Homodimer.

The protein localises to the cytoplasm. The catalysed reaction is uroporphyrinogen III + 4 H(+) = coproporphyrinogen III + 4 CO2. It functions in the pathway porphyrin-containing compound metabolism; protoporphyrin-IX biosynthesis; coproporphyrinogen-III from 5-aminolevulinate: step 4/4. Functionally, catalyzes the decarboxylation of four acetate groups of uroporphyrinogen-III to yield coproporphyrinogen-III. The sequence is that of Uroporphyrinogen decarboxylase from Ectopseudomonas mendocina (strain ymp) (Pseudomonas mendocina).